Reading from the N-terminus, the 241-residue chain is Uridylate kinase (241 aa).

Position 9 to 10 (9 to 10) interacts with ATP; that stretch reads GS. Gly44 serves as a coordination point for UMP. Positions 45 and 49 each coordinate ATP. Residues Asp66 and 114 to 120 contribute to the UMP site; that span reads VTPGQTT. Positions 140, 146, and 149 each coordinate ATP. Positions 222-241 are disordered; the sequence is TDVIPTGSEEPIYWTGSSDA.

Belongs to the UMP kinase family. Homohexamer.

It is found in the cytoplasm. It carries out the reaction UMP + ATP = UDP + ADP. It participates in pyrimidine metabolism; CTP biosynthesis via de novo pathway; UDP from UMP (UMPK route): step 1/1. Its activity is regulated as follows. Inhibited by UTP. Functionally, catalyzes the reversible phosphorylation of UMP to UDP. This is Uridylate kinase from Halorubrum lacusprofundi (strain ATCC 49239 / DSM 5036 / JCM 8891 / ACAM 34).